The primary structure comprises 199 residues: Probable GTP-binding protein EngB (199 aa).

Residues 22-196 (NWPEFAFSGR…GKFILDLVDS (175 aa)) enclose the EngB-type G domain. GTP-binding positions include 30–37 (GRSNVGKS), 57–61 (GRTQS), 75–78 (DLPG), 142–145 (TKVD), and 175–177 (FSA). Ser-37 and Thr-59 together coordinate Mg(2+).

This sequence belongs to the TRAFAC class TrmE-Era-EngA-EngB-Septin-like GTPase superfamily. EngB GTPase family. Mg(2+) serves as cofactor.

Functionally, necessary for normal cell division and for the maintenance of normal septation. The protein is Probable GTP-binding protein EngB of Halothermothrix orenii (strain H 168 / OCM 544 / DSM 9562).